A 352-amino-acid chain; its full sequence is Protein RecA (352 aa).

68 to 75 lines the ATP pocket; the sequence is GPESSGKT.

This sequence belongs to the RecA family.

It localises to the cytoplasm. In terms of biological role, can catalyze the hydrolysis of ATP in the presence of single-stranded DNA, the ATP-dependent uptake of single-stranded DNA by duplex DNA, and the ATP-dependent hybridization of homologous single-stranded DNAs. It interacts with LexA causing its activation and leading to its autocatalytic cleavage. The sequence is that of Protein RecA from Clostridium perfringens (strain SM101 / Type A).